The sequence spans 471 residues: Chromosomal replication initiator protein DnaA (471 aa).

The tract at residues 1–77 (MELNSSFWTL…YTEISDTYGK (77 aa)) is domain I, interacts with DnaA modulators. Positions 77-130 (KPFEVEFSITGNKINSHIETSTTPDEVLSGSEILQAQLARAQNIQPTQPRSSSD) are domain II. The tract at residues 131–349 (TLNSELTFST…GNLKKVKMFS (219 aa)) is domain III, AAA+ region. Residues G176, G178, K179, and T180 each coordinate ATP. The segment at 350 to 471 (ELQGLPIDHE…EQRIHNITRV (122 aa)) is domain IV, binds dsDNA.

It belongs to the DnaA family. As to quaternary structure, oligomerizes as a right-handed, spiral filament on DNA at oriC.

The protein resides in the cytoplasm. Functionally, plays an essential role in the initiation and regulation of chromosomal replication. ATP-DnaA binds to the origin of replication (oriC) to initiate formation of the DNA replication initiation complex once per cell cycle. Binds the DnaA box (a 9 base pair repeat at the origin) and separates the double-stranded (ds)DNA. Forms a right-handed helical filament on oriC DNA; dsDNA binds to the exterior of the filament while single-stranded (ss)DNA is stabiized in the filament's interior. The ATP-DnaA-oriC complex binds and stabilizes one strand of the AT-rich DNA unwinding element (DUE), permitting loading of DNA polymerase. After initiation quickly degrades to an ADP-DnaA complex that is not apt for DNA replication. Binds acidic phospholipids. The sequence is that of Chromosomal replication initiator protein DnaA from Bdellovibrio bacteriovorus (strain ATCC 15356 / DSM 50701 / NCIMB 9529 / HD100).